Here is a 360-residue protein sequence, read N- to C-terminus: DNA integrity scanning protein DisA (360 aa).

The DAC domain occupies 9–147 (DNDLMDILNI…NNIKYVLRDS (139 aa)). ATP-binding positions include G76, L94, and 107 to 111 (TRHRT).

It belongs to the DisA family. In terms of assembly, homooctamer. It depends on Mg(2+) as a cofactor.

The catalysed reaction is 2 ATP = 3',3'-c-di-AMP + 2 diphosphate. Its function is as follows. Participates in a DNA-damage check-point that is active prior to asymmetric division when DNA is damaged. DisA forms globular foci that rapidly scan along the chromosomes during sporulation, searching for lesions. When a lesion is present, DisA pauses at the lesion site. This triggers a cellular response that culminates in a temporary block in sporulation initiation. Also has diadenylate cyclase activity, catalyzing the condensation of 2 ATP molecules into cyclic di-AMP (c-di-AMP). c-di-AMP acts as a signaling molecule that couples DNA integrity with progression of sporulation. The rise in c-di-AMP level generated by DisA while scanning the chromosome, operates as a positive signal that advances sporulation; upon encountering a lesion, the DisA focus arrests at the damaged site and halts c-di-AMP synthesis. In Clostridium tetani (strain Massachusetts / E88), this protein is DNA integrity scanning protein DisA.